The following is a 78-amino-acid chain: Exodeoxyribonuclease 7 small subunit (78 aa).

Belongs to the XseB family. Heterooligomer composed of large and small subunits.

It localises to the cytoplasm. It catalyses the reaction Exonucleolytic cleavage in either 5'- to 3'- or 3'- to 5'-direction to yield nucleoside 5'-phosphates.. In terms of biological role, bidirectionally degrades single-stranded DNA into large acid-insoluble oligonucleotides, which are then degraded further into small acid-soluble oligonucleotides. In Actinobacillus succinogenes (strain ATCC 55618 / DSM 22257 / CCUG 43843 / 130Z), this protein is Exodeoxyribonuclease 7 small subunit.